The sequence spans 411 residues: Citrate synthase (411 aa).

Residues His-304 and Asp-363 contribute to the active site.

Belongs to the citrate synthase family.

It catalyses the reaction oxaloacetate + acetyl-CoA + H2O = citrate + CoA + H(+). It functions in the pathway carbohydrate metabolism; tricarboxylic acid cycle; isocitrate from oxaloacetate: step 1/2. This chain is Citrate synthase (gltA), found in Rickettsia canadensis.